A 149-amino-acid polypeptide reads, in one-letter code: 6,7-dimethyl-8-ribityllumazine synthase (149 aa).

Residues F22, 56-58, and 80-82 each bind 5-amino-6-(D-ribitylamino)uracil; these read ALE and AVI. 85–86 contributes to the (2S)-2-hydroxy-3-oxobutyl phosphate binding site; it reads ET. Catalysis depends on H88, which acts as the Proton donor. N113 lines the 5-amino-6-(D-ribitylamino)uracil pocket. Residue R127 participates in (2S)-2-hydroxy-3-oxobutyl phosphate binding.

This sequence belongs to the DMRL synthase family.

It carries out the reaction (2S)-2-hydroxy-3-oxobutyl phosphate + 5-amino-6-(D-ribitylamino)uracil = 6,7-dimethyl-8-(1-D-ribityl)lumazine + phosphate + 2 H2O + H(+). It functions in the pathway cofactor biosynthesis; riboflavin biosynthesis; riboflavin from 2-hydroxy-3-oxobutyl phosphate and 5-amino-6-(D-ribitylamino)uracil: step 1/2. Functionally, catalyzes the formation of 6,7-dimethyl-8-ribityllumazine by condensation of 5-amino-6-(D-ribitylamino)uracil with 3,4-dihydroxy-2-butanone 4-phosphate. This is the penultimate step in the biosynthesis of riboflavin. This Methylobacillus flagellatus (strain ATCC 51484 / DSM 6875 / VKM B-1610 / KT) protein is 6,7-dimethyl-8-ribityllumazine synthase.